We begin with the raw amino-acid sequence, 248 residues long: Non-specific acid phosphatase (248 aa).

Residues 1 to 20 (MKKLLAVFCAGAFVSTSVFA) form the signal peptide.

Belongs to the class A bacterial acid phosphatase family.

The protein localises to the periplasm. The enzyme catalyses a phosphate monoester + H2O = an alcohol + phosphate. The chain is Non-specific acid phosphatase (phoN) from Providencia stuartii.